The sequence spans 132 residues: Fatty acid-binding protein, brain (132 aa).

Val2 is subject to N-acetylvaline. Residue 127–129 (RHY) participates in a fatty acid binding.

It belongs to the calycin superfamily. Fatty-acid binding protein (FABP) family. In terms of assembly, monomer.

It is found in the cytoplasm. Functionally, FABPs are thought to play a role in the intracellular transport of long-chain fatty acids and their acyl-CoA esters. Binds oleic and palmitic acids but not palmitoyl CoA. The sequence is that of Fatty acid-binding protein, brain (FABP7) from Bos taurus (Bovine).